The primary structure comprises 337 residues: Junctional sarcoplasmic reticulum protein 1 (337 aa).

Positions 1–84 (MATRAMEELD…EKEPVSKVTS (84 aa)) are mediates interaction with CACNA1S. Disordered stretches follow at residues 23 to 125 (SALA…ELPW) and 159 to 337 (EAPA…KGRD). 2 stretches are compositionally biased toward basic and acidic residues: residues 49–59 (SRSHDSQERVT) and 69–79 (TKPKKMEKEPV). The segment covering 165-180 (PESWASSSSSPKGPAS) has biased composition (low complexity). The span at 199-213 (SKLEERVQIPRSEEA) shows a compositional bias: basic and acidic residues. Acidic residues predominate over residues 214 to 225 (AEKDEWESEEAA). Composition is skewed to basic and acidic residues over residues 236-277 (GPKE…RGAR), 285-309 (RRWE…DRKR), and 316-325 (RRPDEEDRPL). A compositionally biased stretch (basic residues) spans 326–337 (GRQKRRAGKGRD).

Interacts with CACNA1S, CACNB1 and calsequestrin.

Its subcellular location is the sarcoplasmic reticulum membrane. The protein localises to the endoplasmic reticulum membrane. In terms of biological role, involved in skeletal muscle excitation/contraction coupling (EC), probably acting as a regulator of the voltage-sensitive calcium channel CACNA1S. EC is a physiological process whereby an electrical signal (depolarization of the plasma membrane) is converted into a chemical signal, a calcium gradient, by the opening of ryanodine receptor calcium release channels. May regulate CACNA1S membrane targeting and activity. This is Junctional sarcoplasmic reticulum protein 1 (JSRP1) from Bos taurus (Bovine).